The chain runs to 668 residues: MFQDNPLLAQLKQQIQENLPKKEGSIKATDKGFGFLEVDSKTSFFIPPAYMKKCIHGDKVVAIIRTENEREVAEPQELIEQSLTRFIGRVKMFKGKLNVVPDHPQLKKLSLKAKLKKGLKPDNFAEGDWVVAHLVRHPLKGDNTFFVEISEKITDADDKIAPWWVTLAQNDLPNSEPAGIENWELKDDADLERIEMTHVPFVTIDGESTKDMDDALYAKKTESGDFELTIAIADPTAYITPEDEMDKVARERGYTIYLPGRNIPMLPRDLADNLCSLIEGEIRPAICCTVTVSKDGVIGDDIKFFAANIKSHARLAYDHVSDWLENGNSDAWQPSEEIATIVRDLYEFSLARAEWREKNAVVFPDRPDYRFELSEDNDVIAIHADMRRSANRLVEESMITANICAGRTLREKFETGVFNTHAGLKPEKIEEVVQLVNPEGTLEFTAESIATLEGFAALRRWLAVQETSYLDNRIRKFQAYSEVGNQPLPHYAMGLDIYATWTSPIRKYGDMINHRMLKAVILDKEPVQKPDDQVGEELALHRKHHKIAERNVSDWLYARTLADEPSKQTCFTGEIFDINRAGARVRLLENGAAAFIPGALILDNKERIECNGDNGTISIDKEVVYKLGDTLEIVLADVNQENRSLVAKPTQVFADQPAPQTEQTVSEE.

Positions 193-521 (RIEMTHVPFV…INHRMLKAVI (329 aa)) constitute an RNB domain. The 83-residue stretch at 568 to 650 (QTCFTGEIFD…ENRSLVAKPT (83 aa)) folds into the S1 motif domain.

The protein belongs to the RNR ribonuclease family. RNase II subfamily.

It localises to the cytoplasm. It carries out the reaction Exonucleolytic cleavage in the 3'- to 5'-direction to yield nucleoside 5'-phosphates.. Its function is as follows. Involved in mRNA degradation. Hydrolyzes single-stranded polyribonucleotides processively in the 3' to 5' direction. This chain is Exoribonuclease 2, found in Vibrio parahaemolyticus serotype O3:K6 (strain RIMD 2210633).